The chain runs to 231 residues: Ion-translocating oxidoreductase complex subunit E (231 aa).

A run of 6 helical transmembrane segments spans residues 18–38, 39–59, 63–83, 86–106, 125–145, and 182–202; these read ALVQ…ATNA, LGLG…ISTL, TPSE…VSAV, LINA…PLIV, ALSA…MFVL, and PFLL…MLAG.

The protein belongs to the NqrDE/RnfAE family. The complex is composed of six subunits: RsxA, RsxB, RsxC, RsxD, RsxE and RsxG.

It localises to the cell inner membrane. Part of a membrane-bound complex that couples electron transfer with translocation of ions across the membrane. Required to maintain the reduced state of SoxR. This is Ion-translocating oxidoreductase complex subunit E from Escherichia coli O6:K15:H31 (strain 536 / UPEC).